The sequence spans 274 residues: Large ribosomal subunit protein uL2 (274 aa).

2 disordered regions span residues A28–K59 and G222–K274. Over residues K39–I49 the composition is skewed to polar residues. Basic and acidic residues predominate over residues D229 to S239.

The protein belongs to the universal ribosomal protein uL2 family. In terms of assembly, part of the 50S ribosomal subunit. Forms a bridge to the 30S subunit in the 70S ribosome.

Its function is as follows. One of the primary rRNA binding proteins. Required for association of the 30S and 50S subunits to form the 70S ribosome, for tRNA binding and peptide bond formation. It has been suggested to have peptidyltransferase activity; this is somewhat controversial. Makes several contacts with the 16S rRNA in the 70S ribosome. This is Large ribosomal subunit protein uL2 from Marinomonas sp. (strain MWYL1).